An 87-amino-acid polypeptide reads, in one-letter code: Small ribosomal subunit protein uS17 (87 aa).

This sequence belongs to the universal ribosomal protein uS17 family. Part of the 30S ribosomal subunit.

Its function is as follows. One of the primary rRNA binding proteins, it binds specifically to the 5'-end of 16S ribosomal RNA. The polypeptide is Small ribosomal subunit protein uS17 (Thioalkalivibrio sulfidiphilus (strain HL-EbGR7)).